A 361-amino-acid chain; its full sequence is Peptide chain release factor 1 (361 aa).

N5-methylglutamine is present on glutamine 233. Basic and acidic residues predominate over residues 280-293 (ERRKKEQERADSRR). Residues 280-307 (ERRKKEQERADSRRGQVGSGDRSERIRT) are disordered.

The protein belongs to the prokaryotic/mitochondrial release factor family. Methylated by PrmC. Methylation increases the termination efficiency of RF1.

Its subcellular location is the cytoplasm. Functionally, peptide chain release factor 1 directs the termination of translation in response to the peptide chain termination codons UAG and UAA. The protein is Peptide chain release factor 1 of Rickettsia massiliae (strain Mtu5).